Consider the following 135-residue polypeptide: Large ribosomal subunit protein uL16 (135 aa).

This sequence belongs to the universal ribosomal protein uL16 family. As to quaternary structure, part of the 50S ribosomal subunit.

Binds 23S rRNA and is also seen to make contacts with the A and possibly P site tRNAs. This is Large ribosomal subunit protein uL16 (rplP) from Carsonella ruddii (strain PV).